The following is a 201-amino-acid chain: Ribosome maturation factor RimP (201 aa).

The disordered stretch occupies residues 180 to 201 (LRRGSAPAQDEEGEDEAPGAPL). Positions 188 to 201 (QDEEGEDEAPGAPL) are enriched in acidic residues.

This sequence belongs to the RimP family.

It is found in the cytoplasm. In terms of biological role, required for maturation of 30S ribosomal subunits. This is Ribosome maturation factor RimP from Methylobacterium sp. (strain 4-46).